We begin with the raw amino-acid sequence, 218 residues long: 3,4-dihydroxy-2-butanone 4-phosphate synthase (218 aa).

Residues 38–39 (RE), aspartate 43, 151–155 (RRGHT), and glutamate 175 contribute to the D-ribulose 5-phosphate site. Glutamate 39 is a binding site for Mg(2+). Residue histidine 154 coordinates Mg(2+).

The protein belongs to the DHBP synthase family. Homodimer. It depends on Mg(2+) as a cofactor. Mn(2+) is required as a cofactor.

It catalyses the reaction D-ribulose 5-phosphate = (2S)-2-hydroxy-3-oxobutyl phosphate + formate + H(+). It functions in the pathway cofactor biosynthesis; riboflavin biosynthesis; 2-hydroxy-3-oxobutyl phosphate from D-ribulose 5-phosphate: step 1/1. Its function is as follows. Catalyzes the conversion of D-ribulose 5-phosphate to formate and 3,4-dihydroxy-2-butanone 4-phosphate. The protein is 3,4-dihydroxy-2-butanone 4-phosphate synthase of Vibrio vulnificus (strain CMCP6).